The chain runs to 622 residues: Protein translocase subunit SecD (622 aa).

6 helical membrane passes run 6–26 (FKIG…YPTV), 460–480 (AGLR…IFYY), 485–505 (MIAD…LAAF), 512–532 (PGIA…VLIF), 559–579 (AIFD…SFGV), and 584–604 (GFAV…IVIT).

It belongs to the SecD/SecF family. SecD subfamily. As to quaternary structure, forms a complex with SecF. Part of the essential Sec protein translocation apparatus which comprises SecA, SecYEG and auxiliary proteins SecDF. Other proteins may also be involved.

It localises to the cell inner membrane. In terms of biological role, part of the Sec protein translocase complex. Interacts with the SecYEG preprotein conducting channel. SecDF uses the proton motive force (PMF) to complete protein translocation after the ATP-dependent function of SecA. The protein is Protein translocase subunit SecD of Rhodothermus marinus (strain ATCC 43812 / DSM 4252 / R-10) (Rhodothermus obamensis).